Reading from the N-terminus, the 331-residue chain is DNA-directed RNA polymerase subunit alpha (331 aa).

The interval 1–233 is alpha N-terminal domain (alpha-NTD); the sequence is MVREKVTVST…DLFIPFLHAE (233 aa). The alpha C-terminal domain (alpha-CTD) stretch occupies residues 265–331; that stretch reads KEIELKYIFI…GILEKHFTID (67 aa).

This sequence belongs to the RNA polymerase alpha chain family. In plastids the minimal PEP RNA polymerase catalytic core is composed of four subunits: alpha, beta, beta', and beta''. When a (nuclear-encoded) sigma factor is associated with the core the holoenzyme is formed, which can initiate transcription.

It localises to the plastid. The protein resides in the chloroplast. The catalysed reaction is RNA(n) + a ribonucleoside 5'-triphosphate = RNA(n+1) + diphosphate. In terms of biological role, DNA-dependent RNA polymerase catalyzes the transcription of DNA into RNA using the four ribonucleoside triphosphates as substrates. This Vitis vinifera (Grape) protein is DNA-directed RNA polymerase subunit alpha.